The primary structure comprises 323 residues: Putative HTH-type transcriptional regulatory protein Hlac_0273 (323 aa).

The 58-residue stretch at 132–189 folds into the HTH cro/C1-type domain; the sequence is LADEREERGWSLGRLATELGVSRRTVSKYEDGMNASIEVAIQLEDLFNEPFSSPVDVL. The H-T-H motif DNA-binding region spans 143 to 162; that stretch reads LGRLATELGVSRRTVSKYED. Residues 188–211 form a disordered region; that stretch reads VLDGAGEVRDADPTPSAPETDPDD.

The sequence is that of Putative HTH-type transcriptional regulatory protein Hlac_0273 from Halorubrum lacusprofundi (strain ATCC 49239 / DSM 5036 / JCM 8891 / ACAM 34).